The following is a 283-amino-acid chain: Coiled-coil domain-containing protein 42 homolog (283 aa).

Coiled-coil stretches lie at residues 31–139 (ATQL…LQRY) and 174–204 (QDLR…HRVS).

This sequence belongs to the CFAP73 family.

The polypeptide is Coiled-coil domain-containing protein 42 homolog (Monosiga brevicollis (Choanoflagellate)).